A 543-amino-acid chain; its full sequence is Ribonuclease Y (543 aa).

A helical transmembrane segment spans residues isoleucine 4–tyrosine 24. The KH domain occupies threonine 233–leucine 296. The HD domain maps to valine 359–alanine 452.

This sequence belongs to the RNase Y family.

It is found in the cell membrane. Its function is as follows. Endoribonuclease that initiates mRNA decay. This chain is Ribonuclease Y, found in Lactobacillus helveticus (strain DPC 4571).